We begin with the raw amino-acid sequence, 232 residues long: Large ribosomal subunit protein uL1 (232 aa).

Belongs to the universal ribosomal protein uL1 family. Part of the 50S ribosomal subunit.

Binds directly to 23S rRNA. The L1 stalk is quite mobile in the ribosome, and is involved in E site tRNA release. In terms of biological role, protein L1 is also a translational repressor protein, it controls the translation of the L11 operon by binding to its mRNA. The sequence is that of Large ribosomal subunit protein uL1 from Porphyromonas gingivalis (strain ATCC 33277 / DSM 20709 / CIP 103683 / JCM 12257 / NCTC 11834 / 2561).